The sequence spans 76 residues: Antimicrobial peptide Smp24 (76 aa).

A signal peptide spans 1 to 22; it reads MQYKTFLVIFMAYLLVTHEAEA. Positions 47–76 are excised as a propeptide; that stretch reads SKRKRDVEDFFDPYQRDLDLELERLLSQLQ.

Belongs to the non-disulfide-bridged peptide (NDBP) superfamily. Medium-length antimicrobial peptide (group 3) family. Expressed by the venom gland.

The protein resides in the secreted. It localises to the target cell membrane. Peptide that shows antimicrobial activity, moderate cytolysis on eukaryote cells and interference with DNA synthesis. Has potent activity against Gram-positive bacteria and moderate activity against Gram-negative bacteria, as well as moderate activity against fungi. Acts by inducing bacterial membrane disruption. Uses multiple modes of action depending on the membrane lipid composition. Uses a toroidal pore mechanism against the prokaryotic like membrane and forms hexagonal phase non-lamellar structures in eukaryotic-like membrane. Shows activity against B.subtilis (MIC=4 ug/ml), S.epidermidis (MIC=8 ug/ml), S.aureus (MIC=8 ug/ml), E.coli (MIC=64 ug/ml), K.pneumoniae (MIC=128 ug/ml), P.aeruginosa (MIC=256 ug/ml), and C.albicans (MIC=32 ug/ml). Shows moderate hemolysis activity. The sequence is that of Antimicrobial peptide Smp24 from Scorpio palmatus (Israeli golden scorpion).